We begin with the raw amino-acid sequence, 284 residues long: MELWYTEQHTENVRFSIKVEKEIHTEKTEFQRIDVLEAKEFGRFFTLDGLMMVTEKDEFIYHDMIVHVPMATNPNIKNVLVIGAGDGGTIRELTRYSTVEKIDMVEIDKRVVDICREYFPLTSCKLDDKRVNVFYEDGLKFIRDKEDEYDLIIVDSTDPFGPGEGLFTKEFYGNCYKALREDGILVNQHESPYYDNDAAAMKEAHEKITKFFPIIRVYQAHIPTYPSGHWLFGFASKKYHPIKDFDAEAWNKLGIKTKYYNTDLHVGCFALPTYVRDMLNGLTD.

Residues 2–237 (ELWYTEQHTE…GHWLFGFASK (236 aa)) enclose the PABS domain. S-methyl-5'-thioadenosine is bound at residue Q31. Residues H62 and D86 each contribute to the spermidine site. Residues E106 and 137 to 138 (DG) each bind S-methyl-5'-thioadenosine. D155 serves as the catalytic Proton acceptor. 155–158 (DSTD) lines the spermidine pocket. P162 contacts S-methyl-5'-thioadenosine.

Belongs to the spermidine/spermine synthase family. Homodimer or homotetramer.

The protein localises to the cytoplasm. It catalyses the reaction S-adenosyl 3-(methylsulfanyl)propylamine + putrescine = S-methyl-5'-thioadenosine + spermidine + H(+). It functions in the pathway amine and polyamine biosynthesis; spermidine biosynthesis; spermidine from putrescine: step 1/1. Catalyzes the irreversible transfer of a propylamine group from the amino donor S-adenosylmethioninamine (decarboxy-AdoMet) to putrescine (1,4-diaminobutane) to yield spermidine. This chain is Polyamine aminopropyltransferase, found in Clostridium beijerinckii (strain ATCC 51743 / NCIMB 8052) (Clostridium acetobutylicum).